A 350-amino-acid chain; its full sequence is Cytosolic Fe-S cluster assembly factor NBP35 (350 aa).

Residues 1–30 (MENGDIPEDANEHCPGPQSESAGKSDSCAG) form a disordered region. [4Fe-4S] cluster-binding residues include Cys14, Cys28, Cys31, and Cys37. 67-74 (GKGGVGKS) is a binding site for ATP.

Belongs to the Mrp/NBP35 ATP-binding proteins family. NUBP1/NBP35 subfamily. In terms of assembly, homodimer and homotetramer. Predominantly homodimeric. [4Fe-4S] cluster is required as a cofactor.

It is found in the cytoplasm. Functionally, component of the cytosolic iron-sulfur (Fe-S) protein assembly (CIA) machinery. Required for maturation of extramitochondrial Fe-S proteins. Functions as a Fe-S scaffold, mediating the de novo assembly of an Fe-S cluster and its transfer to target apoproteins. Essential for embryo development. The polypeptide is Cytosolic Fe-S cluster assembly factor NBP35 (Arabidopsis thaliana (Mouse-ear cress)).